The following is a 184-amino-acid chain: Photosystem I assembly protein Ycf4 (184 aa).

2 consecutive transmembrane segments (helical) span residues 22-42 (FCWA…GISS) and 57-77 (IVFF…LFIS).

Belongs to the Ycf4 family.

Its subcellular location is the plastid. It localises to the chloroplast thylakoid membrane. Seems to be required for the assembly of the photosystem I complex. The sequence is that of Photosystem I assembly protein Ycf4 from Coffea arabica (Arabian coffee).